Consider the following 326-residue polypeptide: Beta-ketoacyl-[acyl-carrier-protein] synthase III (326 aa).

Active-site residues include Cys-120 and His-253. An ACP-binding region spans residues 254-258; the sequence is QANIR. Asn-283 is a catalytic residue.

It belongs to the thiolase-like superfamily. FabH family. As to quaternary structure, homodimer.

It localises to the cytoplasm. It carries out the reaction malonyl-[ACP] + acetyl-CoA + H(+) = 3-oxobutanoyl-[ACP] + CO2 + CoA. It functions in the pathway lipid metabolism; fatty acid biosynthesis. Functionally, catalyzes the condensation reaction of fatty acid synthesis by the addition to an acyl acceptor of two carbons from malonyl-ACP. Catalyzes the first condensation reaction which initiates fatty acid synthesis and may therefore play a role in governing the total rate of fatty acid production. Possesses both acetoacetyl-ACP synthase and acetyl transacylase activities. Its substrate specificity determines the biosynthesis of branched-chain and/or straight-chain of fatty acids. The chain is Beta-ketoacyl-[acyl-carrier-protein] synthase III from Cupriavidus pinatubonensis (strain JMP 134 / LMG 1197) (Cupriavidus necator (strain JMP 134)).